Reading from the N-terminus, the 449-residue chain is GTPase Der (449 aa).

2 EngA-type G domains span residues Pro-4–Thr-174 and Leu-183–Gln-358. GTP is bound by residues Gly-10–Ser-17, Asp-57–Val-61, Asn-126–Asp-129, Gly-189–Ser-196, Asp-236–Ile-240, and Asn-301–Asp-304. The region spanning Lys-359 to Glu-444 is the KH-like domain.

The protein belongs to the TRAFAC class TrmE-Era-EngA-EngB-Septin-like GTPase superfamily. EngA (Der) GTPase family. In terms of assembly, associates with the 50S ribosomal subunit.

Functionally, GTPase that plays an essential role in the late steps of ribosome biogenesis. This Chloroflexus aurantiacus (strain ATCC 29366 / DSM 635 / J-10-fl) protein is GTPase Der.